Reading from the N-terminus, the 565-residue chain is DNA-dependent metalloprotease SPRTN (565 aa).

Positions 23–130 (RALFLEFNDT…RTGANISVYH (108 aa)) constitute a SprT-like domain. Zn(2+) is bound at residue histidine 88. Residue glutamate 89 is part of the active site. Residues histidine 92 and histidine 107 each contribute to the Zn(2+) site. The tract at residues 191 to 219 (EPENYPQKRKRKNDPTISEVNSSSHVKGK) is disordered. Polar residues predominate over residues 205–215 (PTISEVNSSSH). The short motif at 231–239 (FSGTGYKLF) is the SHP-box element. A PIP-box motif is present at residues 288–295 (STPAQSIL). Positions 349 to 389 (TLPSPSIQSTSQKPQKDISFGFTLPSQSFPSTSPGSNSENK) are disordered. Composition is skewed to polar residues over residues 351–361 (PSPSIQSTSQK) and 372–386 (LPSQ…GSNS). The UBZ4-type 1 zinc finger occupies 436 to 463 (KVSCPVCGTEVLECKINDHLDTCTSSGP). Zn(2+) contacts are provided by cysteine 439, cysteine 442, histidine 454, and cysteine 458. The Nuclear localization signal motif lies at 476 to 499 (QSFPSTSQGSNSAIKEPLYKKLQI). The UBZ4-type 2 zinc-finger motif lies at 537-564 (KVCCPVCGTDVLQDKINDHLDTCLQNCN). Residues cysteine 540, cysteine 543, histidine 555, and cysteine 559 each coordinate Zn(2+).

The protein belongs to the Spartan family. Homodimer. Zn(2+) is required as a cofactor. Autocatalytically cleaved in response to double-stranded DNA-binding: autocatalytic cleavage takes place in trans and leads to inactivation.

Its subcellular location is the nucleus. The protein resides in the chromosome. Its activity is regulated as follows. DNA-binding activates the protease activity: single-stranded DNA-binding specifically activates ability to cleave covalent DNA-protein cross-links (DPCs). In contrast, double-stranded DNA-binding specifically activates autocatalytic cleavage, and subsequent inactivation. Its function is as follows. DNA-dependent metalloendopeptidase that mediates the proteolytic cleavage of covalent DNA-protein cross-links (DPCs) during DNA synthesis, thereby playing a key role in maintaining genomic integrity. DPCs are highly toxic DNA lesions that interfere with essential chromatin transactions, such as replication and transcription, and which are induced by reactive agents, such as UV light or formaldehyde. Associates with the DNA replication machinery and specifically removes DPCs during DNA synthesis. Catalyzes proteolytic cleavage of the hmces DNA-protein cross-link following unfolding by the brip1/fancj helicase. Acts as a pleiotropic protease for DNA-binding proteins cross-linked with DNA, such as top1, top2a, histones H3 and H4. Mediates degradation of DPCs that are not ubiquitinated, while it is not able to degrade ubiquitinated DPCs. SPRTN activation requires polymerase collision with DPCs followed by helicase bypass of DPCs. May also act as a 'reader' of ubiquitinated pcna: facilitates chromatin association of rad18 and is required for efficient pcna monoubiquitination, promoting a feed-forward loop to enhance pcna ubiquitination and translesion DNA synthesis. Acts as a regulator of translesion DNA synthesis by recruiting vcp/p97 to sites of DNA damage. The chain is DNA-dependent metalloprotease SPRTN from Xenopus laevis (African clawed frog).